The sequence spans 435 residues: MPKFKAARGAGVQEKHAPLAEQILAGDAVRAGTREKRRGRGTGDEEEEYVGPRLTRRILQQARQQQEELEAEHGSGDRPAVPRERTTRLGPGVPQDGSDDEEWPTLEQAAARAGPGYQAEVVVDPEDERAIEMFMNQNPPARRTLADIIMEKLTEKQTEVETVMSEVSGFPVPQLDPRVLEVYRGVREVLSKYRSGKLPKAFKIIPALSNWEQILYITEPEAWTAAAMYQATRIFASNLKERMAQRFYNLVLLPRVRDDIAEYKRLNFHLYMALKKALFKPGAWFKGILIPLCESGTCTLREAIIVGSIITKCSIPVLHSSAAMLKIAEMEYSGANSIFLRLLLDKKYALPYRVLDALVFHFLGFRTEKRELPVLWHQCLLTLVQRYKADLATEQKEALLELLRLQPHPQLSPEIRRELQSAVPRDVEDVPVTME.

The interval 1–102 (MPKFKAARGA…VPQDGSDDEE (102 aa)) is disordered. Position 40 is an omega-N-methylarginine (Arg-40). The span at 71–87 (AEHGSGDRPAVPRERTT) shows a compositional bias: basic and acidic residues. Position 98 is a phosphoserine (Ser-98). A Phosphothreonine modification is found at Thr-154. Residues Ser-165 and Ser-412 each carry the phosphoserine modification.

Belongs to the bystin family. As to quaternary structure, binds trophinin, tastin and cytokeratins.

It is found in the cytoplasm. The protein resides in the nucleus. Its subcellular location is the nucleolus. Its function is as follows. Required for processing of 20S pre-rRNA precursor and biogenesis of 40S ribosomal subunits. This is Bystin (BYSL) from Bos taurus (Bovine).